The primary structure comprises 165 residues: Phosphopantetheine adenylyltransferase (165 aa).

Ser9 contacts substrate. ATP is bound by residues 9–10 (SF) and His17. 3 residues coordinate substrate: Lys41, Val73, and Arg87. ATP contacts are provided by residues 88–90 (GLR), Glu98, and 123–129 (FTLLSSS).

The protein belongs to the bacterial CoaD family. As to quaternary structure, homohexamer. The cofactor is Mg(2+).

The protein resides in the cytoplasm. The catalysed reaction is (R)-4'-phosphopantetheine + ATP + H(+) = 3'-dephospho-CoA + diphosphate. Its pathway is cofactor biosynthesis; coenzyme A biosynthesis; CoA from (R)-pantothenate: step 4/5. Reversibly transfers an adenylyl group from ATP to 4'-phosphopantetheine, yielding dephospho-CoA (dPCoA) and pyrophosphate. The sequence is that of Phosphopantetheine adenylyltransferase from Herpetosiphon aurantiacus (strain ATCC 23779 / DSM 785 / 114-95).